Consider the following 405-residue polypeptide: Lariat debranching enzyme (405 aa).

Cys-11, His-13, Asp-40, and Asn-85 together coordinate a divalent metal cation. Residues 125 to 159 (SGIWKEWDFNKQRPDWNDLENNNWKANIRNLYHVR) are lariat recognition loop. Positions 179, 231, and 233 each coordinate a divalent metal cation. Residues 242–277 (HNKRSHEPPNKSTSKTKKNNNEIDLDLSSDEDERSG) are disordered. The segment covering 264–274 (IDLDLSSDEDE) has biased composition (acidic residues). Residue Ser-269 is modified to Phosphoserine.

It belongs to the lariat debranching enzyme family. The cofactor is Fe(2+). It depends on Zn(2+) as a cofactor. Mn(2+) serves as cofactor.

Its subcellular location is the nucleus. It is found in the cytoplasm. Active in presence of diverse metals including Fe(2+), Zn(2+) and Mn(2+). Binds two metal cations in two adjacent alpha and beta metal-binding pockets. The activity is the highest with Fe(2+) bound to the 2 metal-binding sites. Activity is low with Zn(2+) and Mn(2+). Its function is as follows. Cleaves the 2'-5' phosphodiester linkage at the branch point of lariat intron pre-mRNAs after splicing and converts them into linear molecules that are subsequently degraded, thereby facilitating ribonucleotide turnover. It also participates in Ty1 retrovirus-like transposition via an RNA lariat intermediate in cDNA synthesis. In Saccharomyces cerevisiae (strain ATCC 204508 / S288c) (Baker's yeast), this protein is Lariat debranching enzyme (DBR1).